Consider the following 270-residue polypeptide: Thiazole synthase (270 aa).

K112 functions as the Schiff-base intermediate with DXP in the catalytic mechanism. 1-deoxy-D-xylulose 5-phosphate contacts are provided by residues G173, 199–200, and 221–222; these read AG and NS.

It belongs to the ThiG family. In terms of assembly, homotetramer. Forms heterodimers with either ThiH or ThiS.

Its subcellular location is the cytoplasm. It carries out the reaction [ThiS sulfur-carrier protein]-C-terminal-Gly-aminoethanethioate + 2-iminoacetate + 1-deoxy-D-xylulose 5-phosphate = [ThiS sulfur-carrier protein]-C-terminal Gly-Gly + 2-[(2R,5Z)-2-carboxy-4-methylthiazol-5(2H)-ylidene]ethyl phosphate + 2 H2O + H(+). It functions in the pathway cofactor biosynthesis; thiamine diphosphate biosynthesis. In terms of biological role, catalyzes the rearrangement of 1-deoxy-D-xylulose 5-phosphate (DXP) to produce the thiazole phosphate moiety of thiamine. Sulfur is provided by the thiocarboxylate moiety of the carrier protein ThiS. In vitro, sulfur can be provided by H(2)S. This is Thiazole synthase from Pseudomonas putida (strain ATCC 700007 / DSM 6899 / JCM 31910 / BCRC 17059 / LMG 24140 / F1).